The sequence spans 208 residues: Protein GrpE (208 aa).

The segment covering 1–12 (MTNKDESVEKNT) has biased composition (basic and acidic residues). Residues 1-49 (MTNKDESVEKNTESTVEVTNVKQNIDDSVEQTEESKGHLQDEAIEETSD) are disordered. Over residues 13-23 (ESTVEVTNVKQ) the composition is skewed to polar residues.

This sequence belongs to the GrpE family. As to quaternary structure, homodimer.

It localises to the cytoplasm. Functionally, participates actively in the response to hyperosmotic and heat shock by preventing the aggregation of stress-denatured proteins, in association with DnaK and GrpE. It is the nucleotide exchange factor for DnaK and may function as a thermosensor. Unfolded proteins bind initially to DnaJ; upon interaction with the DnaJ-bound protein, DnaK hydrolyzes its bound ATP, resulting in the formation of a stable complex. GrpE releases ADP from DnaK; ATP binding to DnaK triggers the release of the substrate protein, thus completing the reaction cycle. Several rounds of ATP-dependent interactions between DnaJ, DnaK and GrpE are required for fully efficient folding. The polypeptide is Protein GrpE (Staphylococcus aureus (strain bovine RF122 / ET3-1)).